Consider the following 205-residue polypeptide: Small ribosomal subunit protein uS4 (205 aa).

Positions 25–48 are disordered; the sequence is KTIEARPTPPGQHGAKNTRRKKSD. An S4 RNA-binding domain is found at 94 to 157; that stretch reads RRLDNVVFRA…TKLPIVVETL (64 aa).

The protein belongs to the universal ribosomal protein uS4 family. In terms of assembly, part of the 30S ribosomal subunit. Contacts protein S5. The interaction surface between S4 and S5 is involved in control of translational fidelity.

Its function is as follows. One of the primary rRNA binding proteins, it binds directly to 16S rRNA where it nucleates assembly of the body of the 30S subunit. With S5 and S12 plays an important role in translational accuracy. This Methylobacillus flagellatus (strain ATCC 51484 / DSM 6875 / VKM B-1610 / KT) protein is Small ribosomal subunit protein uS4.